The primary structure comprises 356 residues: Probable farnesyl diphosphate synthase DDB_G0278823 (356 aa).

3 residues coordinate isopentenyl diphosphate: Lys-55, Arg-58, and Gln-94. Positions 101 and 105 each coordinate Mg(2+). A dimethylallyl diphosphate-binding site is contributed by Arg-110. An isopentenyl diphosphate-binding site is contributed by Arg-111. Lys-203, Thr-204, Gln-243, Lys-260, and Lys-269 together coordinate dimethylallyl diphosphate.

This sequence belongs to the FPP/GGPP synthase family. Requires Mg(2+) as cofactor.

It localises to the cytoplasm. The enzyme catalyses isopentenyl diphosphate + dimethylallyl diphosphate = (2E)-geranyl diphosphate + diphosphate. The catalysed reaction is isopentenyl diphosphate + (2E)-geranyl diphosphate = (2E,6E)-farnesyl diphosphate + diphosphate. It functions in the pathway isoprenoid biosynthesis; farnesyl diphosphate biosynthesis; farnesyl diphosphate from geranyl diphosphate and isopentenyl diphosphate: step 1/1. The protein operates within isoprenoid biosynthesis; geranyl diphosphate biosynthesis; geranyl diphosphate from dimethylallyl diphosphate and isopentenyl diphosphate: step 1/1. Its activity is regulated as follows. Inhibited by aminobisphosphonate drugs (aBP), such as risedronate and alendronate. In terms of biological role, key enzyme in isoprenoid biosynthesis which catalyzes the formation of farnesyl diphosphate (FPP), a sterol precursor. The protein is Probable farnesyl diphosphate synthase DDB_G0278823 of Dictyostelium discoideum (Social amoeba).